The chain runs to 270 residues: Tetraspanin-18 (270 aa).

Over 1 to 15 the chain is Cytoplasmic; sequence MRRNCCHVSFASTLK. A helical membrane pass occupies residues 16-36; that stretch reads ILNFVQAFIGVSIIIYSIWML. Residues 37–99 are Extracellular-facing; that stretch reads HEYSRHLPVD…LRSLDLPAPW (63 aa). Residues 100–120 form a helical membrane-spanning segment; it reads FIYSFMAVGILVCIVTFIGFI. The Cytoplasmic segment spans residues 121-132; sequence AAEAINGCCLCF. The helical transmembrane segment at 133-153 threads the bilayer; it reads YSILKTLLILLEAALVAYIAI. The Extracellular portion of the chain corresponds to 154 to 183; that stretch reads DRHWEKDLPYDPTGELSSLRAFIEENIDIC. A helical membrane pass occupies residues 184–204; that stretch reads KWVGIAVVAVQLLSLLLAMVL. Over 205 to 270 the chain is Cytoplasmic; it reads RAMVSTPKPE…NQSPPVNPKG (66 aa). The tract at residues 212 to 249 is disordered; it reads KPELDEEEDDENPRSRTWDPLLGPQGNQAPAGSSKIEN. The segment covering 236–249 has biased composition (polar residues); that stretch reads QGNQAPAGSSKIEN. Position 245 is a phosphoserine (Ser245).

The protein belongs to the tetraspanin (TM4SF) family. In terms of assembly, homodimer. Constituent of tobamovirus replication complex. In terms of tissue distribution, expressed in rosette leaves.

The protein resides in the membrane. It is found in the vacuole membrane. In terms of biological role, may be involved in the regulation of cell differentiation. Its function is as follows. Promotes intracellular multiplication of tobamoviruses, probably being a component of the replication complex. The polypeptide is Tetraspanin-18 (TOM2AH2) (Arabidopsis thaliana (Mouse-ear cress)).